Reading from the N-terminus, the 338-residue chain is Holliday junction branch migration complex subunit RuvB (338 aa).

The large ATPase domain (RuvB-L) stretch occupies residues 1–184 (MTEEERLLSA…FGIISHMEYY (184 aa)). Residues leucine 23, arginine 24, glycine 65, lysine 68, threonine 69, threonine 70, 131-133 (EDF), arginine 174, tyrosine 184, and arginine 221 contribute to the ATP site. A Mg(2+)-binding site is contributed by threonine 69. Residues 185 to 255 (QEQDLKEIVL…IADKALTLLQ (71 aa)) form a small ATPAse domain (RuvB-S) region. A head domain (RuvB-H) region spans residues 258–338 (HQGLDYVDQK…GYDYLEGRKN (81 aa)). Positions 313 and 318 each coordinate DNA.

This sequence belongs to the RuvB family. As to quaternary structure, homohexamer. Forms an RuvA(8)-RuvB(12)-Holliday junction (HJ) complex. HJ DNA is sandwiched between 2 RuvA tetramers; dsDNA enters through RuvA and exits via RuvB. An RuvB hexamer assembles on each DNA strand where it exits the tetramer. Each RuvB hexamer is contacted by two RuvA subunits (via domain III) on 2 adjacent RuvB subunits; this complex drives branch migration. In the full resolvosome a probable DNA-RuvA(4)-RuvB(12)-RuvC(2) complex forms which resolves the HJ.

The protein resides in the cytoplasm. It carries out the reaction ATP + H2O = ADP + phosphate + H(+). Its function is as follows. The RuvA-RuvB-RuvC complex processes Holliday junction (HJ) DNA during genetic recombination and DNA repair, while the RuvA-RuvB complex plays an important role in the rescue of blocked DNA replication forks via replication fork reversal (RFR). RuvA specifically binds to HJ cruciform DNA, conferring on it an open structure. The RuvB hexamer acts as an ATP-dependent pump, pulling dsDNA into and through the RuvAB complex. RuvB forms 2 homohexamers on either side of HJ DNA bound by 1 or 2 RuvA tetramers; 4 subunits per hexamer contact DNA at a time. Coordinated motions by a converter formed by DNA-disengaged RuvB subunits stimulates ATP hydrolysis and nucleotide exchange. Immobilization of the converter enables RuvB to convert the ATP-contained energy into a lever motion, pulling 2 nucleotides of DNA out of the RuvA tetramer per ATP hydrolyzed, thus driving DNA branch migration. The RuvB motors rotate together with the DNA substrate, which together with the progressing nucleotide cycle form the mechanistic basis for DNA recombination by continuous HJ branch migration. Branch migration allows RuvC to scan DNA until it finds its consensus sequence, where it cleaves and resolves cruciform DNA. This Enterococcus faecalis (strain ATCC 700802 / V583) protein is Holliday junction branch migration complex subunit RuvB.